Consider the following 120-residue polypeptide: Large ribosomal subunit protein uL18 (120 aa).

This sequence belongs to the universal ribosomal protein uL18 family. Part of the 50S ribosomal subunit; part of the 5S rRNA/L5/L18/L25 subcomplex. Contacts the 5S and 23S rRNAs.

This is one of the proteins that bind and probably mediate the attachment of the 5S RNA into the large ribosomal subunit, where it forms part of the central protuberance. This chain is Large ribosomal subunit protein uL18, found in Bacillus cereus (strain ATCC 10987 / NRS 248).